Here is a 127-residue protein sequence, read N- to C-terminus: Mitochondrial pyruvate carrier 2 (127 aa).

Residues 2 to 40 are Mitochondrial matrix-facing; that stretch reads AAAGARGLRATYHRLMDKVELLLPKKLRPLYNHPAGPRT. Residue Lys-26 is modified to N6-acetyllysine. A helical membrane pass occupies residues 41 to 61; it reads VFFWAPIMKWGLVCAGLADMA. The Mitochondrial intermembrane segment spans residues 62 to 72; that stretch reads RPAEKLSTAQS. The chain crosses the membrane as a helical span at residues 73–90; it reads TVLMATGFIWSRYSLVII. The Mitochondrial matrix portion of the chain corresponds to 91–95; sequence PKNWS. Residues 96–115 form a helical membrane-spanning segment; sequence LFAVNFFVGSAGASQLFRIW. Residues 116-127 are Mitochondrial intermembrane-facing; that stretch reads KYNQELKSKGIQ.

Belongs to the mitochondrial pyruvate carrier (MPC) (TC 2.A.105) family. Homodimer. Homooligomer. Forms heterodimers with MPC1 and MPC1L. The heterodimer is the more stable and dominant form. In terms of tissue distribution, liver, kidney, and brain.

Its subcellular location is the mitochondrion inner membrane. It catalyses the reaction pyruvate(out) + H(+)(out) = pyruvate(in) + H(+)(in). Its function is as follows. Mediates the uptake of pyruvate into mitochondria. The chain is Mitochondrial pyruvate carrier 2 (Mpc2) from Rattus norvegicus (Rat).